Reading from the N-terminus, the 67-residue chain is (2R)-sulfolactate sulfo-lyase subunit alpha (67 aa).

In terms of assembly, (2R)-sulfolactate sulfo-lyase is composed of a SuyA and a SuyB subunit.

It is found in the cytoplasm. It catalyses the reaction (2R)-3-sulfolactate = sulfite + pyruvate + H(+). Together with SuyB, desulfonates sulfolactate to pyruvate and sulfite. In Paracoccus pantotrophus (Thiosphaera pantotropha), this protein is (2R)-sulfolactate sulfo-lyase subunit alpha (suyA).